A 104-amino-acid polypeptide reads, in one-letter code: Large ribosomal subunit protein uL24 (104 aa).

Belongs to the universal ribosomal protein uL24 family. As to quaternary structure, part of the 50S ribosomal subunit.

Functionally, one of two assembly initiator proteins, it binds directly to the 5'-end of the 23S rRNA, where it nucleates assembly of the 50S subunit. One of the proteins that surrounds the polypeptide exit tunnel on the outside of the subunit. The sequence is that of Large ribosomal subunit protein uL24 from Chromobacterium violaceum (strain ATCC 12472 / DSM 30191 / JCM 1249 / CCUG 213 / NBRC 12614 / NCIMB 9131 / NCTC 9757 / MK).